Consider the following 341-residue polypeptide: Glycerol-3-phosphate dehydrogenase [NAD(P)+] (341 aa).

NADPH is bound by residues serine 14, phenylalanine 15, arginine 35, and lysine 108. Residues lysine 108 and glycine 136 each coordinate sn-glycerol 3-phosphate. Alanine 140 serves as a coordination point for NADPH. Sn-glycerol 3-phosphate-binding residues include lysine 191, aspartate 244, serine 254, arginine 255, and asparagine 256. The active-site Proton acceptor is the lysine 191. Arginine 255 is a binding site for NADPH. Positions 279 and 281 each coordinate NADPH.

This sequence belongs to the NAD-dependent glycerol-3-phosphate dehydrogenase family.

The protein resides in the cytoplasm. The enzyme catalyses sn-glycerol 3-phosphate + NAD(+) = dihydroxyacetone phosphate + NADH + H(+). It carries out the reaction sn-glycerol 3-phosphate + NADP(+) = dihydroxyacetone phosphate + NADPH + H(+). The protein operates within membrane lipid metabolism; glycerophospholipid metabolism. Its function is as follows. Catalyzes the reduction of the glycolytic intermediate dihydroxyacetone phosphate (DHAP) to sn-glycerol 3-phosphate (G3P), the key precursor for phospholipid synthesis. In Pseudomonas putida (strain ATCC 47054 / DSM 6125 / CFBP 8728 / NCIMB 11950 / KT2440), this protein is Glycerol-3-phosphate dehydrogenase [NAD(P)+].